A 249-amino-acid polypeptide reads, in one-letter code: Probable transcriptional regulatory protein Dtur_1615 (249 aa).

Belongs to the TACO1 family.

The protein localises to the cytoplasm. The chain is Probable transcriptional regulatory protein Dtur_1615 from Dictyoglomus turgidum (strain DSM 6724 / Z-1310).